Here is a 396-residue protein sequence, read N- to C-terminus: Mitogen-activated protein kinase mpkC (396 aa).

The Protein kinase domain maps to 20 to 299; sequence YSDLQPVGLG…AAKALEHPYL (280 aa). Residues 26 to 34 and lysine 49 each bind ATP; that span reads VGLGAFGLV. Catalysis depends on aspartate 141, which acts as the Proton acceptor. A Phosphothreonine modification is found at threonine 171. Residues 171-173 carry the TXY motif; the sequence is TGY. Tyrosine 173 carries the post-translational modification Phosphotyrosine.

Belongs to the protein kinase superfamily. Ser/Thr protein kinase family. MAP kinase subfamily. HOG1 sub-subfamily. Mg(2+) is required as a cofactor. Dually phosphorylated on Thr-171 and Tyr-173, which activates the enzyme.

The enzyme catalyses L-seryl-[protein] + ATP = O-phospho-L-seryl-[protein] + ADP + H(+). It carries out the reaction L-threonyl-[protein] + ATP = O-phospho-L-threonyl-[protein] + ADP + H(+). Activated by tyrosine and threonine phosphorylation. In terms of biological role, mitogen-activated protein kinase required for growth on media where sorbitol or mannitol is the sole carbon source. The protein is Mitogen-activated protein kinase mpkC (mpkC) of Aspergillus niger (strain ATCC MYA-4892 / CBS 513.88 / FGSC A1513).